We begin with the raw amino-acid sequence, 35 residues long: Apolipophorin-3 (35 aa).

Equilibrium between a soluble monomer and a bound lipoprotein form. Apolipophorin-3 associates with lipophorin during lipid loading until each particle contains 9 or 14 molecules of apolipophorin-3. Hemolymph.

It is found in the secreted. In terms of biological role, assists in the loading of diacylglycerol, generated from triacylglycerol stores in the fat body through the action of adipokinetic hormone, into lipophorin, the hemolymph lipoprotein. It increases the lipid carrying capacity of lipophorin by covering the expanding hydrophobic surface resulting from diacylglycerol uptake. It thus plays a critical role in the transport of lipids during flight in several species of insects. Has hemagglutinating activity towards rabbit erythrocytes. The chain is Apolipophorin-3 from Heliothis virescens (Tobacco budworm moth).